Consider the following 301-residue polypeptide: Nitric oxide synthase-interacting protein (301 aa).

Residue Ser-36 is modified to Phosphoserine. The tract at residues 55–75 is U-box-like; sequence DPVVTPDGYLYEREAILEYIL. The Nuclear localization signal motif lies at 78–101; it reads KKEIARQMKAYEKQRGTRREEQKE. Phosphoserine is present on Ser-107. A disordered region spans residues 132-157; sequence KALSGTSPDDVQPGPSVGPPSKDKDK.

This sequence belongs to the NOSIP family. As to quaternary structure, interacts with NOS1 and NOS3. Interacts with PP2A holoenzyme, containing PPP2CA, PPP2CB, PPP2R1A and PPP2R2A subunits. Expressed in heart, brain and lung. Present in endothelial cells (at protein level).

It is found in the cytoplasm. The protein resides in the nucleus. It catalyses the reaction S-ubiquitinyl-[E2 ubiquitin-conjugating enzyme]-L-cysteine + [acceptor protein]-L-lysine = [E2 ubiquitin-conjugating enzyme]-L-cysteine + N(6)-ubiquitinyl-[acceptor protein]-L-lysine.. Its function is as follows. E3 ubiquitin-protein ligase that is essential for proper development of the forebrain, the eye, and the face. Catalyzes monoubiquitination of serine/threonine-protein phosphatase 2A (PP2A) catalytic subunit PPP2CA/PPP2CB. Negatively regulates nitric oxide production by inducing NOS1 and NOS3 translocation to actin cytoskeleton and inhibiting their enzymatic activity. The chain is Nitric oxide synthase-interacting protein (NOSIP) from Homo sapiens (Human).